The primary structure comprises 343 residues: Cytoplasmic tRNA 2-thiolation protein 1 (343 aa).

This sequence belongs to the TtcA family. CTU1/NCS6/ATPBD3 subfamily.

The protein resides in the cytoplasm. The protein operates within tRNA modification; 5-methoxycarbonylmethyl-2-thiouridine-tRNA biosynthesis. In terms of biological role, plays a central role in 2-thiolation of mcm(5)S(2)U at tRNA wobble positions of tRNA(Lys), tRNA(Glu) and tRNA(Gln). Directly binds tRNAs and probably acts by catalyzing adenylation of tRNAs, an intermediate required for 2-thiolation. It is unclear whether it acts as a sulfurtransferase that transfers sulfur from thiocarboxylated URM1 onto the uridine of tRNAs at wobble position. The polypeptide is Cytoplasmic tRNA 2-thiolation protein 1 (Drosophila erecta (Fruit fly)).